Reading from the N-terminus, the 214-residue chain is Pyridoxine/pyridoxamine 5'-phosphate oxidase (214 aa).

Substrate contacts are provided by residues 9-12 and lysine 67; that span reads RKDY. Residues 62 to 67, 77 to 78, arginine 83, lysine 84, and glutamine 106 contribute to the FMN site; these read RMVLLK and FT. 3 residues coordinate substrate: tyrosine 124, arginine 128, and serine 132. FMN-binding positions include 141 to 142 and tryptophan 186; that span reads QS. 192–194 is a substrate binding site; that stretch reads RLH. Position 196 (arginine 196) interacts with FMN.

Belongs to the pyridoxamine 5'-phosphate oxidase family. In terms of assembly, homodimer. FMN is required as a cofactor.

It catalyses the reaction pyridoxamine 5'-phosphate + O2 + H2O = pyridoxal 5'-phosphate + H2O2 + NH4(+). The enzyme catalyses pyridoxine 5'-phosphate + O2 = pyridoxal 5'-phosphate + H2O2. It participates in cofactor metabolism; pyridoxal 5'-phosphate salvage; pyridoxal 5'-phosphate from pyridoxamine 5'-phosphate: step 1/1. The protein operates within cofactor metabolism; pyridoxal 5'-phosphate salvage; pyridoxal 5'-phosphate from pyridoxine 5'-phosphate: step 1/1. Its function is as follows. Catalyzes the oxidation of either pyridoxine 5'-phosphate (PNP) or pyridoxamine 5'-phosphate (PMP) into pyridoxal 5'-phosphate (PLP). In Nostoc sp. (strain PCC 7120 / SAG 25.82 / UTEX 2576), this protein is Pyridoxine/pyridoxamine 5'-phosphate oxidase.